A 79-amino-acid chain; its full sequence is Translational regulator CsrA (79 aa).

This sequence belongs to the CsrA/RsmA family. As to quaternary structure, homodimer; the beta-strands of each monomer intercalate to form a hydrophobic core, while the alpha-helices form wings that extend away from the core.

Its subcellular location is the cytoplasm. A translational regulator that binds mRNA to regulate translation initiation and/or mRNA stability. Usually binds in the 5'-UTR at or near the Shine-Dalgarno sequence preventing ribosome-binding, thus repressing translation. Its main target seems to be the major flagellin gene, while its function is anatagonized by FliW. This Geotalea uraniireducens (strain Rf4) (Geobacter uraniireducens) protein is Translational regulator CsrA.